A 267-amino-acid chain; its full sequence is Phosphatidylserine decarboxylase proenzyme (267 aa).

Catalysis depends on charge relay system; for autoendoproteolytic cleavage activity residues Asp-78, His-132, and Ser-236. The active-site Schiff-base intermediate with substrate; via pyruvic acid; for decarboxylase activity is the Ser-236. Ser-236 is modified (pyruvic acid (Ser); by autocatalysis).

This sequence belongs to the phosphatidylserine decarboxylase family. PSD-B subfamily. Prokaryotic type I sub-subfamily. Heterodimer of a large membrane-associated beta subunit and a small pyruvoyl-containing alpha subunit. The cofactor is pyruvate. Post-translationally, is synthesized initially as an inactive proenzyme. Formation of the active enzyme involves a self-maturation process in which the active site pyruvoyl group is generated from an internal serine residue via an autocatalytic post-translational modification. Two non-identical subunits are generated from the proenzyme in this reaction, and the pyruvate is formed at the N-terminus of the alpha chain, which is derived from the carboxyl end of the proenzyme. The autoendoproteolytic cleavage occurs by a canonical serine protease mechanism, in which the side chain hydroxyl group of the serine supplies its oxygen atom to form the C-terminus of the beta chain, while the remainder of the serine residue undergoes an oxidative deamination to produce ammonia and the pyruvoyl prosthetic group on the alpha chain. During this reaction, the Ser that is part of the protease active site of the proenzyme becomes the pyruvoyl prosthetic group, which constitutes an essential element of the active site of the mature decarboxylase.

Its subcellular location is the cell membrane. It carries out the reaction a 1,2-diacyl-sn-glycero-3-phospho-L-serine + H(+) = a 1,2-diacyl-sn-glycero-3-phosphoethanolamine + CO2. It participates in phospholipid metabolism; phosphatidylethanolamine biosynthesis; phosphatidylethanolamine from CDP-diacylglycerol: step 2/2. In terms of biological role, catalyzes the formation of phosphatidylethanolamine (PtdEtn) from phosphatidylserine (PtdSer). The polypeptide is Phosphatidylserine decarboxylase proenzyme (Helicobacter pylori (strain J99 / ATCC 700824) (Campylobacter pylori J99)).